The following is a 288-amino-acid chain: uncharacterized protein (288 aa).

The helical transmembrane segment at 92 to 112 (LPTILVILGVIVVIAIVYAII) threads the bilayer. Residues 121 to 183 (DDHNAASEKA…NDSEKLEIKA (63 aa)) form a disordered region. Basic and acidic residues-rich tracts occupy residues 136–146 (SKYEIPKDSTL) and 154–181 (SEKETDTKKETKENEDKKKENDSEKLEI). The stretch at 147 to 185 (KENQNNSSEKETDTKKETKENEDKKKENDSEKLEIKAAG) forms a coiled coil.

The protein localises to the cell membrane. This is an uncharacterized protein from Bacillus subtilis (strain 168).